A 660-amino-acid polypeptide reads, in one-letter code: Rhamnogalacturonate lyase B (660 aa).

The signal sequence occupies residues 1 to 18 (MRLGVCFSLAAAASVARA). N25, N109, N142, and N284 each carry an N-linked (GlcNAc...) asparagine glycan. The disordered stretch occupies residues 446 to 466 (RLGTPDKSSGEFRHGAARDPT). Residues 453-466 (SSGEFRHGAARDPT) are compositionally biased toward basic and acidic residues. N524, N566, and N635 each carry an N-linked (GlcNAc...) asparagine glycan.

It belongs to the polysaccharide lyase 4 family.

It is found in the secreted. The enzyme catalyses Endotype eliminative cleavage of L-alpha-rhamnopyranosyl-(1-&gt;4)-alpha-D-galactopyranosyluronic acid bonds of rhamnogalacturonan I domains in ramified hairy regions of pectin leaving L-rhamnopyranose at the reducing end and 4-deoxy-4,5-unsaturated D-galactopyranosyluronic acid at the non-reducing end.. Pectinolytic enzymes consist of four classes of enzymes: pectin lyase, polygalacturonase, pectin methylesterase and rhamnogalacturonase. Degrades the rhamnogalacturonan I (RG-I) backbone of pectin. Active against linseed rhamnogalacturonan. This is Rhamnogalacturonate lyase B (rglB) from Emericella nidulans (strain FGSC A4 / ATCC 38163 / CBS 112.46 / NRRL 194 / M139) (Aspergillus nidulans).